The following is a 417-amino-acid chain: UDP-N-acetylglucosamine 1-carboxyvinyltransferase (417 aa).

Phosphoenolpyruvate is bound at residue 22 to 23 (KN). R93 lines the UDP-N-acetyl-alpha-D-glucosamine pocket. The active-site Proton donor is C117. C117 is modified (2-(S-cysteinyl)pyruvic acid O-phosphothioketal). Residues 122–126 (RPVDQ), D304, and I326 contribute to the UDP-N-acetyl-alpha-D-glucosamine site.

This sequence belongs to the EPSP synthase family. MurA subfamily.

It is found in the cytoplasm. The catalysed reaction is phosphoenolpyruvate + UDP-N-acetyl-alpha-D-glucosamine = UDP-N-acetyl-3-O-(1-carboxyvinyl)-alpha-D-glucosamine + phosphate. It participates in cell wall biogenesis; peptidoglycan biosynthesis. Its function is as follows. Cell wall formation. Adds enolpyruvyl to UDP-N-acetylglucosamine. The polypeptide is UDP-N-acetylglucosamine 1-carboxyvinyltransferase (Neisseria meningitidis serogroup A / serotype 4A (strain DSM 15465 / Z2491)).